A 138-amino-acid chain; its full sequence is Small ribosomal subunit protein uS11c (138 aa).

Residues methionine 1 to arginine 23 form a disordered region. Residues glycine 9–arginine 23 show a composition bias toward basic residues.

The protein belongs to the universal ribosomal protein uS11 family. As to quaternary structure, part of the 30S ribosomal subunit.

Its subcellular location is the plastid. The protein localises to the chloroplast. The chain is Small ribosomal subunit protein uS11c from Daucus carota (Wild carrot).